A 343-amino-acid polypeptide reads, in one-letter code: Globoside alpha-1,3-N-acetylgalactosaminyltransferase 1 (343 aa).

Residues 1-6 (MISRKA) are Cytoplasmic-facing. The helical; Signal-anchor for type II membrane protein transmembrane segment at 7 to 27 (LGSLVCLSAVATLIWIASGNW) threads the bilayer. The Lumenal portion of the chain corresponds to 28–343 (KVHYLPYYLP…VDKNYQEVRN (316 aa)). Asn104 carries an N-linked (GlcNAc...) asparagine glycan. Residues 112-117 (FAVGKY), 202-204 (DID), and 224-227 (HPGY) contribute to the substrate site. Mn(2+) is bound by residues Asp202 and Asp204. Glu294 serves as the catalytic Nucleophile.

Belongs to the glycosyltransferase 6 family. Mn(2+) serves as cofactor.

The protein localises to the golgi apparatus membrane. The protein operates within protein modification; protein glycosylation. Functionally, may catalyze the formation of some glycolipid via the addition of N-acetylgalactosamine (GalNAc) in alpha-1,3-linkage to some substrate. Glycolipids probably serve for adherence of some pathogens. The sequence is that of Globoside alpha-1,3-N-acetylgalactosaminyltransferase 1 from Gallus gallus (Chicken).